A 328-amino-acid polypeptide reads, in one-letter code: Tetraacyldisaccharide 4'-kinase (328 aa).

59–66 contacts ATP; the sequence is TAGGNGKT.

The protein belongs to the LpxK family.

The catalysed reaction is a lipid A disaccharide + ATP = a lipid IVA + ADP + H(+). Its pathway is glycolipid biosynthesis; lipid IV(A) biosynthesis; lipid IV(A) from (3R)-3-hydroxytetradecanoyl-[acyl-carrier-protein] and UDP-N-acetyl-alpha-D-glucosamine: step 6/6. In terms of biological role, transfers the gamma-phosphate of ATP to the 4'-position of a tetraacyldisaccharide 1-phosphate intermediate (termed DS-1-P) to form tetraacyldisaccharide 1,4'-bis-phosphate (lipid IVA). The chain is Tetraacyldisaccharide 4'-kinase from Aliivibrio fischeri (strain MJ11) (Vibrio fischeri).